Here is a 134-residue protein sequence, read N- to C-terminus: Calvin cycle protein CP12-3, chloroplastic (134 aa).

The segment at 1–21 is disordered; that stretch reads MISGSATASHGRVLLPSQRER. The transit peptide at 1 to 42 directs the protein to the chloroplast; it reads MISGSATASHGRVLLPSQRERRPVSTGSNILRFRETVPRQFS. 2 disulfides stabilise this stretch: Cys78-Cys87 and Cys120-Cys129.

It belongs to the CP12 family. In terms of assembly, monomer. Component of a complex that contains two dimers of PRK, two tetramers of GAPDH and CP12. CP12 associates with GAPDH, causing its conformation to change. This GAPDH/CP12 complex binds PRK to form a half-complex (one unit). This unit probably dimerizes due partially to interactions between the enzymes of each unit. In terms of processing, contains two disulfide bonds; only the oxidized protein, with two disulfide bonds, is active in complex formation. The C-terminal disulfide is involved in the interaction with GAPDH and the N-terminal disulfide mediates the binding of PRK with this binary complex. In terms of tissue distribution, mostly expressed, at low levels, in stems and, to a lesser extent, in leaves and roots.

The protein resides in the plastid. Its subcellular location is the chloroplast. Acts as a linker essential in the assembly of a core complex of PRK/GAPDH. Coordinates the reversible inactivation of chloroplast enzymes GAPDH and PRK during darkness in photosynthetic tissues. The polypeptide is Calvin cycle protein CP12-3, chloroplastic (CP12-3) (Arabidopsis thaliana (Mouse-ear cress)).